The primary structure comprises 188 residues: Elongation factor P (188 aa).

Belongs to the elongation factor P family.

It localises to the cytoplasm. The protein operates within protein biosynthesis; polypeptide chain elongation. In terms of biological role, involved in peptide bond synthesis. Stimulates efficient translation and peptide-bond synthesis on native or reconstituted 70S ribosomes in vitro. Probably functions indirectly by altering the affinity of the ribosome for aminoacyl-tRNA, thus increasing their reactivity as acceptors for peptidyl transferase. The polypeptide is Elongation factor P (Cellvibrio japonicus (strain Ueda107) (Pseudomonas fluorescens subsp. cellulosa)).